The chain runs to 170 residues: Inducible metalloproteinase inhibitor protein (170 aa).

The first 19 residues, 1-19 (MKCLLYLCLWCYCVLVSSS), serve as a signal peptide directing secretion. N48 and N149 each carry an N-linked (GlcNAc...) asparagine glycan.

In terms of processing, cleaved. Five disulfide bonds are present. When artificially cleaved by thermolysin between Asn-56 and Ile-57, the two obtained chains (called heavy and light chains) remain linked. Post-translationally, the N-terminus is blocked.

In terms of biological role, inhibits thermolysin, bacillolysin and pseudolysin, B.polymyxa metalloprotease and human MMP1 and MMP3. No activity on trypsin or cysteine protease papain. The chain is Inducible metalloproteinase inhibitor protein (IMPI) from Galleria mellonella (Greater wax moth).